The sequence spans 534 residues: Cytochrome P450 monooxygenase ascG (534 aa).

The chain crosses the membrane as a helical span at residues 13 to 33 (FVASFPALSAAAGLIVAISFI). The N-linked (GlcNAc...) asparagine glycan is linked to asparagine 466. Residue cysteine 469 participates in heme binding.

This sequence belongs to the cytochrome P450 family. The cofactor is heme.

Its subcellular location is the membrane. The enzyme catalyses ilicicolin C + NADPH + O2 + H(+) = ascochlorin + NADP(+) + 2 H2O. Its pathway is secondary metabolite biosynthesis; terpenoid biosynthesis. In terms of biological role, cytochrome P450 monooxygenase; part of the asc-1 gene cluster that mediates the biosynthesis of both ascochlorin and ascofuranone, a strong inhibitor of cyanide-insensitive alternative oxidases and a promising drug candidate against African trypanosomiasis. The first step in the pathway is performed by the non-reducing polyketide synthase ascC that produces orsellinic acid by condensing acetyl-CoA with 3 malonyl-CoA units. Orsellinic acid is then prenylated by the prenyltransferase ascA to yield ilicicolinic acid B. Ilicicolinic acid B is further reduced to ilicicolin B by the reductase ascB. The halogenase ascD then chlorinates ilicicolin B to produce ilicicolin A which is converted to ilicicolin A epoxide by the cytochrome P450 monooxygenase ascE that catalyzes stereoselective epoxidation of the terminal double bond of the prenyl group. Ilicicolin A epoxide is the last common precursor for the biosynthesis of ascofuranone and ascochlorin. The terpene cyclase ascF produces a monocyclic terpene, and the cyclization reaction is proposed to be initiated by protonation of the terminal epoxide of ilicicolin A epoxide to generate a monocyclic tertiarycation, which is followed by a series of hydride and methyl shifts with abstraction of proton, leading to the formation of the (14S,15R,19R)-trimethylcyclohexanone ring structure of ilicicolin C, which is finally reduced to ascochlorin by the dehydrogenase ascG. On the other hand, ilicicolin A epoxide is hydroxylated by the cytochrome P450 monooxygenase ascH, and the resultant product is cyclized by the terpene cyclase ascI to ascofuranol via protonation-initiated epoxide ring opening, which facilitates the 6-endo-tet cyclization to form the tetrahy-drofuran ring. Finally, ascofuranol is oxidized into ascofuranone by ascJ. The polypeptide is Cytochrome P450 monooxygenase ascG (Acremonium egyptiacum (Oospora egyptiaca)).